Here is a 476-residue protein sequence, read N- to C-terminus: Sulfate adenylyltransferase subunit 1 (476 aa).

The region spanning 24 to 239 is the tr-type G domain; that stretch reads KSMLRFLTCG…VLENVDIDQK (216 aa). The segment at 33–40 is G1; the sequence is GSVDDGKS. 33–40 contacts GTP; that stretch reads GSVDDGKS. Residues 91–95 are G2; it reads GITID. The segment at 112-115 is G3; that stretch reads DTPG. Residues 112 to 116 and 167 to 170 each bind GTP; these read DTPGH and NKMD. Positions 167-170 are G4; that stretch reads NKMD. A G5 region spans residues 205-207; sequence SAL.

This sequence belongs to the TRAFAC class translation factor GTPase superfamily. Classic translation factor GTPase family. CysN/NodQ subfamily. As to quaternary structure, heterodimer composed of CysD, the smaller subunit, and CysN.

The enzyme catalyses sulfate + ATP + H(+) = adenosine 5'-phosphosulfate + diphosphate. It participates in sulfur metabolism; hydrogen sulfide biosynthesis; sulfite from sulfate: step 1/3. Its function is as follows. With CysD forms the ATP sulfurylase (ATPS) that catalyzes the adenylation of sulfate producing adenosine 5'-phosphosulfate (APS) and diphosphate, the first enzymatic step in sulfur assimilation pathway. APS synthesis involves the formation of a high-energy phosphoric-sulfuric acid anhydride bond driven by GTP hydrolysis by CysN coupled to ATP hydrolysis by CysD. The protein is Sulfate adenylyltransferase subunit 1 of Vibrio atlanticus (strain LGP32) (Vibrio splendidus (strain Mel32)).